Reading from the N-terminus, the 587-residue chain is Kelch-like ECH-associated protein 1B (587 aa).

The region spanning 44-117 is the BTB domain; it reads CDVTLRVRYC…AYTASISVGE (74 aa). The BACK domain occupies 153-253; the sequence is IGIASFAEQI…LTPHFLQRQL (101 aa). Kelch repeat units follow at residues 292-337, 338-388, 389-435, 436-482, 484-529, and 530-576; these read LIYT…VISG, LLYA…VIDG, MIYA…VINR, LLYA…ALGN, IYVM…THHG, and RIYV…VTME.

The protein belongs to the KEAP1 family. In terms of assembly, homodimer and heterodimer; heterodimerizes with keap1a. Component of the BCR(KEAP1) E3 ubiquitin ligase complex, at least composed of 2 molecules of cul3, 2 molecules of keap1 (keap1a and/or keap1b), and rbx1. Interacts with nfe2l2/nrf2; the interaction is direct. In terms of processing, non-enzymatic covalent modifications of reactive cysteines by electrophile metabolites inactivate the BCR(KEAP1) complex. Widely expressed.

The protein localises to the cytoplasm. The protein resides in the nucleus. The protein operates within protein modification; protein ubiquitination. Its activity is regulated as follows. Ubiquitin ligase activity of the BCR(KEAP1) complex is inhibited by oxidative stress and electrophile metabolites such as sulforaphane. Electrophile metabolites react with reactive cysteine residues in keap1 and trigger non-enzymatic covalent modifications of these cysteine residues, leading to inactivate the ubiquitin ligase activity of the BCR(KEAP1) complex. Substrate-specific adapter of a BCR (BTB-CUL3-RBX1) E3 ubiquitin ligase complex that regulates the response to oxidative stress by targeting nfe2l2/nrf2 for ubiquitination. Keap1 acts as a key sensor of oxidative and electrophilic stress: in normal conditions, the BCR(KEAP1) complex mediates ubiquitination and degradation of nfe2l2/nrf2, a transcription factor regulating expression of many cytoprotective genes. In response to oxidative stress, different electrophile metabolites trigger non-enzymatic covalent modifications of highly reactive cysteine residues in KEAP1, leading to inactivate the ubiquitin ligase activity of the BCR(KEAP1) complex, promoting nfe2l2/nrf2 nuclear accumulation and expression of phase II detoxifying enzymes. This Danio rerio (Zebrafish) protein is Kelch-like ECH-associated protein 1B.